Reading from the N-terminus, the 273-residue chain is Homeobox protein Nkx-2.2 (273 aa).

Disordered stretches follow at residues 1–56 (MSLT…LDAV) and 91–131 (AASA…KRKR). Residues 20–38 (DTNDEEGSVAEGPEEESEG) are compositionally biased toward acidic residues. The homeobox DNA-binding region spans 128 to 187 (KRKRRVLFSKAQTYELERRFRQQRYLSAPEREHLASLIRLTPTQVKIWFQNHRYKMKRAR).

The protein belongs to the NK-2 homeobox family. As to quaternary structure, interacts with OLIG2.

It is found in the nucleus. Its function is as follows. Transcriptional activator involved in the development of insulin-producting beta cells in the endocrine pancreas. May also be involved in specifying diencephalic neuromeric boundaries, and in controlling the expression of genes that play a role in axonal guidance. Binds to elements within the NEUROD1 promoter. This chain is Homeobox protein Nkx-2.2 (NKX2-2), found in Mesocricetus auratus (Golden hamster).